The chain runs to 97 residues: Large ribosomal subunit protein eL21 (97 aa).

Residues 1-24 (MVQKPHSFRRKTRKKLRKHPRRRG) show a composition bias toward basic residues. The disordered stretch occupies residues 1–25 (MVQKPHSFRRKTRKKLRKHPRRRGL).

The protein belongs to the eukaryotic ribosomal protein eL21 family.

This Pyrococcus horikoshii (strain ATCC 700860 / DSM 12428 / JCM 9974 / NBRC 100139 / OT-3) protein is Large ribosomal subunit protein eL21 (rpl21e).